The primary structure comprises 65 residues: uncharacterized protein (65 aa).

The next 2 helical transmembrane spans lie at 4-24 (TIWL…MLYP) and 45-65 (FGGG…KTIG).

Its subcellular location is the cell membrane. This is an uncharacterized protein from Escherichia coli O157:H7.